Consider the following 470-residue polypeptide: Dendritic cell-specific transmembrane protein (470 aa).

At 1–33 (MRLWTLGTSIFLRLWGTYVFPRSPSWLDFIQHL) the chain is on the cytoplasmic side. The helical transmembrane segment at 34–54 (GVCCFVAFLSVSLFSAAFYWI) threads the bilayer. Residue Leu55 is a topological domain, extracellular. Residues 56–76 (PPVALLSSVWMITCVFLCCSK) form a helical membrane-spanning segment. The Cytoplasmic segment spans residues 77-97 (RARCFILLAVLSCGLREGRNA). A helical membrane pass occupies residues 98 to 118 (LIAAGTGVVIFGHVENIFYNF). At 119–209 (RGLLDSMTCN…MVVTTELLTS (91 aa)) the chain is on the extracellular side. A helical membrane pass occupies residues 210-230 (VGQKLLALAGLLLILVSTGLF). Over 231 to 292 (LKRFLGPCGW…LQLTPKEKKT (62 aa)) the chain is Cytoplasmic. A helical transmembrane segment spans residues 293–313 (LGLFFLPVLTYLYMWVLFAAV). At 314–376 (DYLLYRLISS…PKPRLSVSET (63 aa)) the chain is on the extracellular side. The chain crosses the membrane as a helical span at residues 377-397 (WVPLSIILLTLIILGLLSSML). The Cytoplasmic portion of the chain corresponds to 398–470 (MQLKILVSVS…QTIPANEDDL (73 aa)).

In terms of assembly, interacts with CREB3. Monomer. Homodimer. Isoform 1 interacts (via the C-terminus cytoplasmic tail) with OS9 isoform 1 (via the C-terminus tail); the interaction induces DCSTAMP redistribution to the endoplasmic reticulum-Golgi intermediate compartment. Isoform 1 interacts (via the C-terminus cytoplasmic tail) with OS9 isoform 2 (via the C-terminus tail). In terms of processing, glycosylated. In terms of tissue distribution, expressed in macrophages and bone marrow dendritic cells (BM-DC). Weakly expressed in the spleen and lymph node. Highly expressed in multi-nuclear osteoclasts compared to mono-nuclear macrophages. Expressed in foreign body giant cells (FBGCs). Isoform 1 and isoform 2 are expressed in osteoclasts.

Its subcellular location is the cell membrane. The protein resides in the endoplasmic reticulum membrane. The protein localises to the endoplasmic reticulum-Golgi intermediate compartment membrane. It localises to the endosome. Functionally, probable cell surface receptor that plays several roles in cellular fusion, cell differentiation, bone and immune homeostasis. Plays a role in TNFSF11-mediated osteoclastogenesis. Cooperates with OCSTAMP in modulating cell-cell fusion in both osteoclasts and foreign body giant cells (FBGCs). Participates in osteoclast bone resorption. Involved in inducing the expression of tartrate-resistant acid phosphatase in osteoclast precursors. Plays a role in haematopoietic stem cell differentiation of bone marrow cells toward the myeloid lineage. Inhibits the development of neutrophilic granulocytes. Plays also a role in the regulation of dendritic cell (DC) antigen presentation activity by controlling phagocytic activity. Involved in the maintenance of immune self-tolerance and avoidance of autoimmune reactions. The polypeptide is Dendritic cell-specific transmembrane protein (Dcstamp) (Mus musculus (Mouse)).